A 327-amino-acid polypeptide reads, in one-letter code: ABC transporter periplasmic-binding protein YphF (327 aa).

An N-terminal signal peptide occupies residues M1–A26.

This sequence belongs to the bacterial solute-binding protein 2 family.

Its subcellular location is the periplasm. Its function is as follows. Probably part of the binding-protein-dependent transport system YphDEF. This Escherichia coli (strain K12) protein is ABC transporter periplasmic-binding protein YphF (yphF).